A 158-amino-acid chain; its full sequence is NAD(P)H-quinone oxidoreductase subunit J, chloroplastic (158 aa).

This sequence belongs to the complex I 30 kDa subunit family. In terms of assembly, NDH is composed of at least 16 different subunits, 5 of which are encoded in the nucleus.

Its subcellular location is the plastid. The protein localises to the chloroplast thylakoid membrane. The catalysed reaction is a plastoquinone + NADH + (n+1) H(+)(in) = a plastoquinol + NAD(+) + n H(+)(out). The enzyme catalyses a plastoquinone + NADPH + (n+1) H(+)(in) = a plastoquinol + NADP(+) + n H(+)(out). NDH shuttles electrons from NAD(P)H:plastoquinone, via FMN and iron-sulfur (Fe-S) centers, to quinones in the photosynthetic chain and possibly in a chloroplast respiratory chain. The immediate electron acceptor for the enzyme in this species is believed to be plastoquinone. Couples the redox reaction to proton translocation, and thus conserves the redox energy in a proton gradient. This is NAD(P)H-quinone oxidoreductase subunit J, chloroplastic from Pelargonium hortorum (Common geranium).